The primary structure comprises 502 residues: Cobyric acid synthase (502 aa).

The region spanning 260-433 (ILRVAVCAIP…WHGSLESDGF (174 aa)) is the GATase cobBQ-type domain. Cys-341 acts as the Nucleophile in catalysis. His-425 is an active-site residue.

Belongs to the CobB/CobQ family. CobQ subfamily.

The protein operates within cofactor biosynthesis; adenosylcobalamin biosynthesis. Catalyzes amidations at positions B, D, E, and G on adenosylcobyrinic A,C-diamide. NH(2) groups are provided by glutamine, and one molecule of ATP is hydrogenolyzed for each amidation. The polypeptide is Cobyric acid synthase (Streptomyces avermitilis (strain ATCC 31267 / DSM 46492 / JCM 5070 / NBRC 14893 / NCIMB 12804 / NRRL 8165 / MA-4680)).